The chain runs to 336 residues: Nitrilase (336 aa).

One can recognise a CN hydrolase domain in the interval 5–278; the sequence is LKVACVQAAP…EGLLYATLDP (274 aa). E45 acts as the Proton acceptor in catalysis. K127 serves as the catalytic Proton donor. The Nucleophile role is filled by C161.

This sequence belongs to the carbon-nitrogen hydrolase superfamily. Nitrilase family.

The enzyme catalyses a nitrile + 2 H2O = a carboxylate + NH4(+). It catalyses the reaction (indol-3-yl)acetonitrile + 2 H2O = (indol-3-yl)acetate + NH4(+). The catalysed reaction is phenylpropanonitrile + 2 H2O = 3-phenylpropanoate + NH4(+). Arylacetonitrilase which is capable of hydrolyzing indole-3-acetonitrile (IAN) to the plant hormone indole-3-acetate (IAA), and allows the plant pathogenic bacterium to use IAN as a sole nitrogen source. Is also able to hydrolyze phenylpropionitrile (PPN), allowing the use of this compound as a sole nitrogen source. This enzyme may represent an additional mechanism for IAA biosynthesis or may be used to degrade and assimilate aldoximes and nitriles produced during host plant secondary metabolism. The sequence is that of Nitrilase from Pseudomonas syringae pv. syringae (strain B728a).